Reading from the N-terminus, the 341-residue chain is D-aspartate oxidase (341 aa).

Residues Asp-36, Arg-37, Thr-43, Ser-44, Met-50, Gly-307, Ile-311, and Ser-312 each contribute to the FAD site. Residues 339-341 (SKL) carry the Microbody targeting signal motif.

The protein belongs to the DAMOX/DASOX family. Tetramer. Interacts with PEX5; the interaction is direct and required for localization of DDO to the peroxisome. It depends on FAD as a cofactor. In terms of tissue distribution, expressed in liver and kidney (at protein level). In the brain, expressed in the frontal, temporal, and occipital lobes of the cortex, hippocampus, striatum, diencephalon, brainstem, cerebellum, spinal cord, plexus choroiderus and ependyma (at protein level). Also expressed in the lung, muscle, heart, spleen, small intestine and testis (at protein level).

It is found in the peroxisome matrix. It localises to the cytoplasm. The protein resides in the cytosol. The enzyme catalyses D-aspartate + O2 + H2O = oxaloacetate + H2O2 + NH4(+). It catalyses the reaction D-glutamate + O2 + H2O = H2O2 + 2-oxoglutarate + NH4(+). Inhibited by aminooxyacetic acid, malonate, meso-tartrate and potassium bromide. In terms of biological role, selectively catalyzes the oxidative deamination of acidic amino acids. Suppresses the level of D-aspartate in the brain, an amino acid that can act as an agonist for glutamate receptors. Protects the organism from the toxicity of D-amino acids. May also function in the intestine. The chain is D-aspartate oxidase from Rattus norvegicus (Rat).